A 2374-amino-acid polypeptide reads, in one-letter code: CCR4-NOT transcription complex subunit 1 (2374 aa).

Short sequence motifs (LXXLL) lie at residues 153-157, 181-185, 223-227, and 570-574; these read LPDLL, LHLLL, LAPLL, and LSMLL. Residues 1009–1051 are compositionally biased toward low complexity; sequence LAQAQAQSQPPKAPQPGQASTLVTTATTTTTAAKTTTITRPTA. A disordered region spans residues 1009 to 1060; it reads LAQAQAQSQPPKAPQPGQASTLVTTATTTTTAAKTTTITRPTAVGPKKDVPP. The interaction with CCR4-NOT complex catalytic subunits stretch occupies residues 1082–1604; the sequence is EPPENVQEKI…QPMKQQAWPT (523 aa). 3 consecutive short sequence motifs (LXXLL) follow at residues 1638 to 1642, 1940 to 1944, and 2094 to 2098; these read IRSLL, LIALL, and LRVLL.

The protein belongs to the CNOT1 family. As to quaternary structure, component of the CCR4-NOT complex.

It localises to the cytoplasm. The protein resides in the nucleus. In terms of biological role, scaffolding component of the CCR4-NOT complex which is one of the major cellular mRNA deadenylases and is linked to various cellular processes including bulk mRNA degradation, miRNA-mediated repression, translational repression during translational initiation and general transcription regulation. Additional complex functions may be a consequence of its influence on mRNA expression. Its scaffolding function implies its interaction with the catalytic complex module and diverse RNA-binding proteins mediating the complex recruitment to selected mRNA 3'UTRs. Acts as a transcriptional repressor. Represses the ligand-dependent transcriptional activation by nuclear receptors. This Danio rerio (Zebrafish) protein is CCR4-NOT transcription complex subunit 1 (cnot1).